The sequence spans 470 residues: Methylenetetrahydrofolate--tRNA-(uracil-5-)-methyltransferase TrmFO (470 aa).

Residue 10–15 (GAGLAG) coordinates FAD.

Belongs to the MnmG family. TrmFO subfamily. FAD is required as a cofactor.

It localises to the cytoplasm. The catalysed reaction is uridine(54) in tRNA + (6R)-5,10-methylene-5,6,7,8-tetrahydrofolate + NADH + H(+) = 5-methyluridine(54) in tRNA + (6S)-5,6,7,8-tetrahydrofolate + NAD(+). It catalyses the reaction uridine(54) in tRNA + (6R)-5,10-methylene-5,6,7,8-tetrahydrofolate + NADPH + H(+) = 5-methyluridine(54) in tRNA + (6S)-5,6,7,8-tetrahydrofolate + NADP(+). Catalyzes the folate-dependent formation of 5-methyl-uridine at position 54 (M-5-U54) in all tRNAs. The protein is Methylenetetrahydrofolate--tRNA-(uracil-5-)-methyltransferase TrmFO of Prochlorococcus marinus (strain MIT 9215).